A 150-amino-acid polypeptide reads, in one-letter code: 1,4-dihydroxy-2-naphthoyl-CoA hydrolase (150 aa).

Residue D19 is part of the active site.

Belongs to the 4-hydroxybenzoyl-CoA thioesterase family. DHNA-CoA hydrolase subfamily.

It catalyses the reaction 1,4-dihydroxy-2-naphthoyl-CoA + H2O = 1,4-dihydroxy-2-naphthoate + CoA + H(+). The protein operates within cofactor biosynthesis; phylloquinone biosynthesis. Its pathway is quinol/quinone metabolism; 1,4-dihydroxy-2-naphthoate biosynthesis; 1,4-dihydroxy-2-naphthoate from chorismate: step 7/7. In terms of biological role, catalyzes the hydrolysis of 1,4-dihydroxy-2-naphthoyl-CoA (DHNA-CoA) to 1,4-dihydroxy-2-naphthoate (DHNA), a reaction involved in phylloquinone (vitamin K1) biosynthesis. In Prochlorococcus marinus (strain MIT 9312), this protein is 1,4-dihydroxy-2-naphthoyl-CoA hydrolase.